A 154-amino-acid chain; its full sequence is Putative lipoprotein MAB_4074c (154 aa).

The signal sequence occupies residues 1-21; that stretch reads MMNRVIVGAMGLLAAGAVVVG. Cysteine 22 carries the N-palmitoyl cysteine lipid modification. Cysteine 22 is lipidated: S-diacylglycerol cysteine.

It belongs to the mycobacterial 19 kDa antigen family.

It is found in the cell membrane. The protein is Putative lipoprotein MAB_4074c of Mycobacteroides abscessus (strain ATCC 19977 / DSM 44196 / CCUG 20993 / CIP 104536 / JCM 13569 / NCTC 13031 / TMC 1543 / L948) (Mycobacterium abscessus).